The sequence spans 88 residues: uncharacterized protein (88 aa).

Positions 1-22 (MGLTLKEHAEVCMALAESSASA) are cleaved as a signal peptide.

This is an uncharacterized protein from Haemophilus influenzae (strain ATCC 51907 / DSM 11121 / KW20 / Rd).